We begin with the raw amino-acid sequence, 293 residues long: Acetylglutamate kinase (293 aa).

Substrate contacts are provided by residues 70-71 (GG), arginine 92, and asparagine 186.

Belongs to the acetylglutamate kinase family. ArgB subfamily.

The protein localises to the cytoplasm. The enzyme catalyses N-acetyl-L-glutamate + ATP = N-acetyl-L-glutamyl 5-phosphate + ADP. Its pathway is amino-acid biosynthesis; L-arginine biosynthesis; N(2)-acetyl-L-ornithine from L-glutamate: step 2/4. Functionally, catalyzes the ATP-dependent phosphorylation of N-acetyl-L-glutamate. The protein is Acetylglutamate kinase of Parasynechococcus marenigrum (strain WH8102).